Here is a 268-residue protein sequence, read N- to C-terminus: Phosphatidylglycerol--prolipoprotein diacylglyceryl transferase (268 aa).

7 helical membrane-spanning segments follow: residues 21 to 41 (WYGI…GRFA), 54 to 74 (FAII…VFVL), 93 to 113 (GLAI…YLPM), 122 to 142 (ADVV…GNFF), 173 to 193 (VMHP…GILL), 203 to 223 (GVVF…IESI), and 236 to 256 (VAQL…AWFL). Arginine 137 serves as a coordination point for a 1,2-diacyl-sn-glycero-3-phospho-(1'-sn-glycerol).

The protein belongs to the Lgt family.

It localises to the cell membrane. It catalyses the reaction L-cysteinyl-[prolipoprotein] + a 1,2-diacyl-sn-glycero-3-phospho-(1'-sn-glycerol) = an S-1,2-diacyl-sn-glyceryl-L-cysteinyl-[prolipoprotein] + sn-glycerol 1-phosphate + H(+). It participates in protein modification; lipoprotein biosynthesis (diacylglyceryl transfer). In terms of biological role, catalyzes the transfer of the diacylglyceryl group from phosphatidylglycerol to the sulfhydryl group of the N-terminal cysteine of a prolipoprotein, the first step in the formation of mature lipoproteins. The sequence is that of Phosphatidylglycerol--prolipoprotein diacylglyceryl transferase from Symbiobacterium thermophilum (strain DSM 24528 / JCM 14929 / IAM 14863 / T).